The sequence spans 668 residues: Ubiquitin ligase complex F-box protein UFO1 (668 aa).

Positions 5–51 (GLVLQDLPPEILINIFSHLDEKDLFTLQELSTHFRNLIHDEELWKNL) constitute an F-box domain. A Phosphoserine modification is found at Ser511. Thr514 bears the Phosphothreonine mark. UIM domains follow at residues 547–566 (DEDE…YETQ), 583–602 (EDDE…DERR), and 651–668 (NVDE…SEIN). The segment covering 564–578 (ETQTNSSANHGNNTN) has biased composition (polar residues). Disordered stretches follow at residues 564–585 (ETQT…DEDD) and 599–639 (DERR…TENT).

In terms of assembly, interacts with SKP1. Component of the probable SCF(UFO1) complex containing CDC53, SKP1, RBX1 and UFO1.

It participates in protein modification; protein ubiquitination. In terms of biological role, substrate recognition component of a SCF (SKP1-CUL1-F-box protein) E3 ubiquitin-protein ligase complex which mediates the ubiquitination and subsequent proteasomal degradation of target proteins. Probably recognizes and binds to phosphorylated target proteins. The sequence is that of Ubiquitin ligase complex F-box protein UFO1 (UFO1) from Saccharomyces cerevisiae (strain ATCC 204508 / S288c) (Baker's yeast).